We begin with the raw amino-acid sequence, 365 residues long: Phospho-N-acetylmuramoyl-pentapeptide-transferase (365 aa).

The next 10 helical transmembrane spans lie at tyrosine 22–glycine 42, threonine 74–leucine 94, threonine 95–phenylalanine 115, tyrosine 133–leucine 153, serine 168–glycine 188, glycine 201–glutamate 221, leucine 240–phenylalanine 260, valine 267–methionine 287, leucine 292–valine 312, and lysine 342–isoleucine 362.

It belongs to the glycosyltransferase 4 family. MraY subfamily. Mg(2+) serves as cofactor.

It localises to the cell inner membrane. It catalyses the reaction UDP-N-acetyl-alpha-D-muramoyl-L-alanyl-gamma-D-glutamyl-meso-2,6-diaminopimeloyl-D-alanyl-D-alanine + di-trans,octa-cis-undecaprenyl phosphate = di-trans,octa-cis-undecaprenyl diphospho-N-acetyl-alpha-D-muramoyl-L-alanyl-D-glutamyl-meso-2,6-diaminopimeloyl-D-alanyl-D-alanine + UMP. The protein operates within cell wall biogenesis; peptidoglycan biosynthesis. Functionally, catalyzes the initial step of the lipid cycle reactions in the biosynthesis of the cell wall peptidoglycan: transfers peptidoglycan precursor phospho-MurNAc-pentapeptide from UDP-MurNAc-pentapeptide onto the lipid carrier undecaprenyl phosphate, yielding undecaprenyl-pyrophosphoryl-MurNAc-pentapeptide, known as lipid I. The polypeptide is Phospho-N-acetylmuramoyl-pentapeptide-transferase (Francisella tularensis subsp. tularensis (strain WY96-3418)).